Reading from the N-terminus, the 123-residue chain is Large ribosomal subunit protein bL12 (123 aa).

Belongs to the bacterial ribosomal protein bL12 family. In terms of assembly, homodimer. Part of the ribosomal stalk of the 50S ribosomal subunit. Forms a multimeric L10(L12)X complex, where L10 forms an elongated spine to which 2 to 4 L12 dimers bind in a sequential fashion. Binds GTP-bound translation factors.

Forms part of the ribosomal stalk which helps the ribosome interact with GTP-bound translation factors. Is thus essential for accurate translation. This chain is Large ribosomal subunit protein bL12, found in Chromobacterium violaceum (strain ATCC 12472 / DSM 30191 / JCM 1249 / CCUG 213 / NBRC 12614 / NCIMB 9131 / NCTC 9757 / MK).